Here is a 141-residue protein sequence, read N- to C-terminus: Small ribosomal subunit protein bS6 (141 aa).

The segment at 110 to 141 is disordered; sequence SRTKVSDQPAAVEAAEAPAAPAAQEESAPASA. Positions 117–141 are enriched in low complexity; sequence QPAAVEAAEAPAAPAAQEESAPASA.

Belongs to the bacterial ribosomal protein bS6 family.

Binds together with bS18 to 16S ribosomal RNA. The polypeptide is Small ribosomal subunit protein bS6 (Acidobacterium capsulatum (strain ATCC 51196 / DSM 11244 / BCRC 80197 / JCM 7670 / NBRC 15755 / NCIMB 13165 / 161)).